The following is a 608-amino-acid chain: Isocitrate dehydrogenase kinase/phosphatase (608 aa).

ATP is bound by residues 327 to 333 (APGIKGL) and Lys-348. Asp-383 is an active-site residue.

This sequence belongs to the AceK family.

It is found in the cytoplasm. The catalysed reaction is L-seryl-[isocitrate dehydrogenase] + ATP = O-phospho-L-seryl-[isocitrate dehydrogenase] + ADP + H(+). Functionally, bifunctional enzyme which can phosphorylate or dephosphorylate isocitrate dehydrogenase (IDH) on a specific serine residue. This is a regulatory mechanism which enables bacteria to bypass the Krebs cycle via the glyoxylate shunt in response to the source of carbon. When bacteria are grown on glucose, IDH is fully active and unphosphorylated, but when grown on acetate or ethanol, the activity of IDH declines drastically concomitant with its phosphorylation. This chain is Isocitrate dehydrogenase kinase/phosphatase, found in Burkholderia ambifaria (strain ATCC BAA-244 / DSM 16087 / CCUG 44356 / LMG 19182 / AMMD) (Burkholderia cepacia (strain AMMD)).